The chain runs to 239 residues: Large ribosomal subunit protein uL30 (239 aa).

The segment at 1–22 (MEGVMSEAPQSSIRKKEYEARM) is disordered.

This sequence belongs to the universal ribosomal protein uL30 family.

The polypeptide is Large ribosomal subunit protein uL30 (RPL7) (Encephalitozoon cuniculi (strain GB-M1) (Microsporidian parasite)).